The sequence spans 709 residues: Ribosomal RNA large subunit methyltransferase K/L (709 aa).

The THUMP domain occupies 43-154 (LAYRITLWTR…NGVITIAMNF (112 aa)).

Belongs to the methyltransferase superfamily. RlmKL family.

Its subcellular location is the cytoplasm. The catalysed reaction is guanosine(2445) in 23S rRNA + S-adenosyl-L-methionine = N(2)-methylguanosine(2445) in 23S rRNA + S-adenosyl-L-homocysteine + H(+). The enzyme catalyses guanosine(2069) in 23S rRNA + S-adenosyl-L-methionine = N(2)-methylguanosine(2069) in 23S rRNA + S-adenosyl-L-homocysteine + H(+). Functionally, specifically methylates the guanine in position 2445 (m2G2445) and the guanine in position 2069 (m7G2069) of 23S rRNA. This is Ribosomal RNA large subunit methyltransferase K/L from Shewanella baltica (strain OS155 / ATCC BAA-1091).